Here is a 359-residue protein sequence, read N- to C-terminus: Halocin-H4 (359 aa).

Positions 1 to 46 are cleaved as a signal peptide; it reads MSKDRDGRRTSRRGTLKKIGGFSLGALSFGAVGRTQAATGSSVTTA. Disordered stretches follow at residues 40-59 and 340-359; these read GSSVTTADIAPPGPNGDPKS and IPDRIYEEIEQKKKQRSRKQ.

Its subcellular location is the secreted. Its function is as follows. Has antibacterial activity against other haloarchaeons. Interacts with the membrane of the target cells where it causes permeability changes that result in an ionic imbalance leading to cell lysis and death. The polypeptide is Halocin-H4 (halH4) (Haloferax mediterranei (strain ATCC 33500 / DSM 1411 / JCM 8866 / NBRC 14739 / NCIMB 2177 / R-4) (Halobacterium mediterranei)).